A 531-amino-acid chain; its full sequence is Jacalin-related lectin 16 (531 aa).

Jacalin-type lectin domains follow at residues Met-1–Trp-87, Pro-90–Thr-232, Leu-235–Pro-378, and Thr-385–Pro-528.

The protein belongs to the jacalin lectin family.

In Arabidopsis thaliana (Mouse-ear cress), this protein is Jacalin-related lectin 16 (JAL16).